A 155-amino-acid chain; its full sequence is 3-hydroxyacyl-[acyl-carrier-protein] dehydratase FabZ (155 aa).

Histidine 54 is an active-site residue.

It belongs to the thioester dehydratase family. FabZ subfamily.

Its subcellular location is the cytoplasm. It catalyses the reaction a (3R)-hydroxyacyl-[ACP] = a (2E)-enoyl-[ACP] + H2O. Involved in unsaturated fatty acids biosynthesis. Catalyzes the dehydration of short chain beta-hydroxyacyl-ACPs and long chain saturated and unsaturated beta-hydroxyacyl-ACPs. In Burkholderia ambifaria (strain MC40-6), this protein is 3-hydroxyacyl-[acyl-carrier-protein] dehydratase FabZ.